The following is a 165-amino-acid chain: Ribosome maturation factor RimM (165 aa).

The region spanning 90 to 161 is the PRC barrel domain; that stretch reads EDEYFIVDLV…LITIRPSGEW (72 aa).

Belongs to the RimM family. As to quaternary structure, binds ribosomal protein uS19.

It is found in the cytoplasm. Functionally, an accessory protein needed during the final step in the assembly of 30S ribosomal subunit, possibly for assembly of the head region. Essential for efficient processing of 16S rRNA. May be needed both before and after RbfA during the maturation of 16S rRNA. It has affinity for free ribosomal 30S subunits but not for 70S ribosomes. The sequence is that of Ribosome maturation factor RimM from Clostridium perfringens (strain ATCC 13124 / DSM 756 / JCM 1290 / NCIMB 6125 / NCTC 8237 / Type A).